The primary structure comprises 570 residues: Proline--tRNA ligase (570 aa).

It belongs to the class-II aminoacyl-tRNA synthetase family. ProS type 1 subfamily. Homodimer.

Its subcellular location is the cytoplasm. The catalysed reaction is tRNA(Pro) + L-proline + ATP = L-prolyl-tRNA(Pro) + AMP + diphosphate. Catalyzes the attachment of proline to tRNA(Pro) in a two-step reaction: proline is first activated by ATP to form Pro-AMP and then transferred to the acceptor end of tRNA(Pro). As ProRS can inadvertently accommodate and process non-cognate amino acids such as alanine and cysteine, to avoid such errors it has two additional distinct editing activities against alanine. One activity is designated as 'pretransfer' editing and involves the tRNA(Pro)-independent hydrolysis of activated Ala-AMP. The other activity is designated 'posttransfer' editing and involves deacylation of mischarged Ala-tRNA(Pro). The misacylated Cys-tRNA(Pro) is not edited by ProRS. The sequence is that of Proline--tRNA ligase from Thermoanaerobacter pseudethanolicus (strain ATCC 33223 / 39E) (Clostridium thermohydrosulfuricum).